Here is a 592-residue protein sequence, read N- to C-terminus: Methylenetetrahydrofolate reductase (NADH) 1 (592 aa).

The Proton donor/acceptor role is filled by Glu21. Residues 21–26 (EFFPPK) and 52–53 (TW) contribute to the NAD(+) site. FAD is bound by residues 52–53 (TW), His81, 111–113 (RGD), Tyr153, 157–160 (HPDV), Asp175, and Lys182. Asp113 provides a ligand contact to substrate. The substrate site is built by Gln193 and Tyr285.

Belongs to the methylenetetrahydrofolate reductase family. As to quaternary structure, homodimer. Requires FAD as cofactor.

It catalyses the reaction (6S)-5-methyl-5,6,7,8-tetrahydrofolate + NAD(+) = (6R)-5,10-methylene-5,6,7,8-tetrahydrofolate + NADH + H(+). It functions in the pathway one-carbon metabolism; tetrahydrofolate interconversion. Its activity is regulated as follows. Plant MTHFRs strongly prefer NADH over NADPH. Not inhibited by methionine or S-adenosylmethionine. Functionally, the probable reversibility of the MTHFR reaction in plants suggests that they can metabolize the methyl group of 5,10-methylenetetrahydrofolate to serine, sugars and starch. The protein is Methylenetetrahydrofolate reductase (NADH) 1 (MTHFR1) of Arabidopsis thaliana (Mouse-ear cress).